The sequence spans 701 residues: MFSALKKLVGSEQAPGRDRNIPAGLQSMNQALQRRFAKGVQYNMKIVIRGDRNTGKTALWHRLQGKKFVEEYIPTQEIQVTSIHWSYKTTDDVVKVEVWDVVDKGKCKKRGDGLKMENDPQEAESEMALDAEFLDVYKNCNGVVMMFDITKQWTFNYILRELPKVPTHVPVCVLGNYRDMGEHRVILPDDVRDVLDHLDRPPGSSYFRYAESSMKNSFGLKYLHRFFNIPFLQLQRETLLRQLETNQLDIDATLEELSVQQETEDQNYDIFLEMMEARSRGHASPLTTSGQSPSSGSQSPVVPPSTVSTGSSSPSTPQPVLQPPLQAPPAPPAPAEAPPLPAAPPRRSIIARLFGSTPATEAAPPPPEPTPAAEASQKVQNVEDFVPEDSLDGSFLEDTVPAKDEKRLGARGPQDSDSDRETQAGNPMVAGFQDDVDLEDKPPSRPLPPTGPVPSEDITLSSEEEAEEGAGHPKAAVLAPQKCPEPETRRSSTKALGPPRDAAPRAAKPRPEGPSGKLEEGTDKPVSSESDAEGPIAAQMLSFVMDDPDFESDSDAQRRAGEFPVREDLSDLTDEDAGPVQPPAPPKPLAPSFRLKDDSDLFGLGLEEPGREDSSEQDKEGRPPAKEKKKKKKKGREEEDKAAKKRSKHKKSRERADDKGRDERRRRPRGPQRTALDELEAFLGGGAPSGPLRGGGDYEAL.

At methionine 1 the chain carries N-acetylmethionine. The segment at 39–279 (GVQYNMKIVI…IFLEMMEARS (241 aa)) is small GTPase-like. Residues 50–57 (GDRNTGKT), 100–104 (DVVDK), and 177–179 (YRD) each bind GTP. The segment at 279–701 (SRGHASPLTT…LRGGGDYEAL (423 aa)) is disordered. Over residues 284-315 (SPLTTSGQSPSSGSQSPVVPPSTVSTGSSSPS) the composition is skewed to low complexity. The segment covering 316–344 (TPQPVLQPPLQAPPAPPAPAEAPPLPAAP) has biased composition (pro residues). Phosphoserine occurs at positions 394, 416, 418, 461, and 462. Residues 495–506 (ALGPPRDAAPRA) show a composition bias toward low complexity. Serine 552 carries the phosphoserine modification. Positions 555–569 (DAQRRAGEFPVREDL) are enriched in basic and acidic residues. Serine 570 bears the Phosphoserine mark. Threonine 573 is subject to Phosphothreonine. Residues 580-589 (VQPPAPPKPL) are compositionally biased toward pro residues. Residues 608-626 (EPGREDSSEQDKEGRPPAK) are compositionally biased toward basic and acidic residues. Phosphoserine occurs at positions 614 and 615. The segment at 629–667 (KKKKKKGREEEDKAAKKRSKHKKSRERADDKGRDERRRR) is interaction with CDKN2A. The segment covering 643 to 653 (AKKRSKHKKSR) has biased composition (basic residues). A compositionally biased stretch (basic and acidic residues) spans 654–665 (ERADDKGRDERR). The segment covering 683-701 (LGGGAPSGPLRGGGDYEAL) has biased composition (gly residues).

This sequence belongs to the small GTPase superfamily. Rab family.

The protein resides in the nucleus. It is found in the cytoplasm. Its function is as follows. May enhance cellular proliferation. May reduce growth inhibitory activity of CDKN2A. The polypeptide is Rab-like protein 6 (RABL6) (Bos taurus (Bovine)).